Consider the following 457-residue polypeptide: UDP-N-acetylmuramoylalanine--D-glutamate ligase (457 aa).

126–132 (GTAGKGS) provides a ligand contact to ATP.

It belongs to the MurCDEF family.

It is found in the cytoplasm. The enzyme catalyses UDP-N-acetyl-alpha-D-muramoyl-L-alanine + D-glutamate + ATP = UDP-N-acetyl-alpha-D-muramoyl-L-alanyl-D-glutamate + ADP + phosphate + H(+). It functions in the pathway cell wall biogenesis; peptidoglycan biosynthesis. In terms of biological role, cell wall formation. Catalyzes the addition of glutamate to the nucleotide precursor UDP-N-acetylmuramoyl-L-alanine (UMA). The polypeptide is UDP-N-acetylmuramoylalanine--D-glutamate ligase (Deinococcus radiodurans (strain ATCC 13939 / DSM 20539 / JCM 16871 / CCUG 27074 / LMG 4051 / NBRC 15346 / NCIMB 9279 / VKM B-1422 / R1)).